A 96-amino-acid polypeptide reads, in one-letter code: Seed trypsin/chymotrypsin inhibitor IVA (96 aa).

A signal peptide spans 1-10 (LSFAANVVNA). Residues 11 to 24 (RFDSTSFITQVLSN) constitute a propeptide that is removed on maturation. Cystine bridges form between Cys32-Cys85, Cys33-Cys48, Cys36-Cys81, Cys38-Cys46, Cys55-Cys62, Cys59-Cys74, and Cys64-Cys72. A propeptide spans 88 to 96 (SEVEEVIKN) (removed in PSTI I).

This sequence belongs to the Bowman-Birk serine protease inhibitor family. In terms of tissue distribution, seed.

Its function is as follows. Inhibitor of trypsin and of chymotrypsin. May function as a natural phytochemical defense against predators. The chain is Seed trypsin/chymotrypsin inhibitor IVA (TI1236) from Pisum sativum (Garden pea).